Consider the following 490-residue polypeptide: Aspartyl/glutamyl-tRNA(Asn/Gln) amidotransferase subunit B (490 aa).

Belongs to the GatB/GatE family. GatB subfamily. In terms of assembly, heterotrimer of A, B and C subunits.

The catalysed reaction is L-glutamyl-tRNA(Gln) + L-glutamine + ATP + H2O = L-glutaminyl-tRNA(Gln) + L-glutamate + ADP + phosphate + H(+). The enzyme catalyses L-aspartyl-tRNA(Asn) + L-glutamine + ATP + H2O = L-asparaginyl-tRNA(Asn) + L-glutamate + ADP + phosphate + 2 H(+). Functionally, allows the formation of correctly charged Asn-tRNA(Asn) or Gln-tRNA(Gln) through the transamidation of misacylated Asp-tRNA(Asn) or Glu-tRNA(Gln) in organisms which lack either or both of asparaginyl-tRNA or glutaminyl-tRNA synthetases. The reaction takes place in the presence of glutamine and ATP through an activated phospho-Asp-tRNA(Asn) or phospho-Glu-tRNA(Gln). The sequence is that of Aspartyl/glutamyl-tRNA(Asn/Gln) amidotransferase subunit B from Burkholderia thailandensis (strain ATCC 700388 / DSM 13276 / CCUG 48851 / CIP 106301 / E264).